A 130-amino-acid chain; its full sequence is Small ribosomal subunit protein uS8 (130 aa).

This sequence belongs to the universal ribosomal protein uS8 family. As to quaternary structure, part of the 30S ribosomal subunit. Contacts proteins S5 and S12.

Its function is as follows. One of the primary rRNA binding proteins, it binds directly to 16S rRNA central domain where it helps coordinate assembly of the platform of the 30S subunit. The chain is Small ribosomal subunit protein uS8 from Pseudomonas fluorescens (strain ATCC BAA-477 / NRRL B-23932 / Pf-5).